Here is a 473-residue protein sequence, read N- to C-terminus: Sulfate adenylyltransferase subunit 1 (473 aa).

In terms of domain architecture, tr-type G spans 19–238 (KTLLKFLTCG…IKIKNSISSE (220 aa)). The segment at 28 to 35 (GSVDDGKS) is G1. 28–35 (GSVDDGKS) provides a ligand contact to GTP. The segment at 86-90 (GITID) is G2. The interval 107–110 (DTPG) is G3. Residues 107–111 (DTPGH) and 162–165 (NKMD) each bind GTP. A G4 region spans residues 162–165 (NKMD). The G5 stretch occupies residues 200 to 202 (SAL).

This sequence belongs to the TRAFAC class translation factor GTPase superfamily. Classic translation factor GTPase family. CysN/NodQ subfamily. In terms of assembly, heterodimer composed of CysD, the smaller subunit, and CysN.

It carries out the reaction sulfate + ATP + H(+) = adenosine 5'-phosphosulfate + diphosphate. It participates in sulfur metabolism; hydrogen sulfide biosynthesis; sulfite from sulfate: step 1/3. Functionally, with CysD forms the ATP sulfurylase (ATPS) that catalyzes the adenylation of sulfate producing adenosine 5'-phosphosulfate (APS) and diphosphate, the first enzymatic step in sulfur assimilation pathway. APS synthesis involves the formation of a high-energy phosphoric-sulfuric acid anhydride bond driven by GTP hydrolysis by CysN coupled to ATP hydrolysis by CysD. In Buchnera aphidicola subsp. Acyrthosiphon pisum (strain 5A), this protein is Sulfate adenylyltransferase subunit 1.